The primary structure comprises 89 residues: Small ribosomal subunit protein uS15 (89 aa).

It belongs to the universal ribosomal protein uS15 family. As to quaternary structure, part of the 30S ribosomal subunit. Forms a bridge to the 50S subunit in the 70S ribosome, contacting the 23S rRNA.

One of the primary rRNA binding proteins, it binds directly to 16S rRNA where it helps nucleate assembly of the platform of the 30S subunit by binding and bridging several RNA helices of the 16S rRNA. Its function is as follows. Forms an intersubunit bridge (bridge B4) with the 23S rRNA of the 50S subunit in the ribosome. This chain is Small ribosomal subunit protein uS15, found in Shewanella baltica (strain OS185).